The chain runs to 117 residues: Regulator of ribonuclease activity B (117 aa).

The protein belongs to the RraB family. In terms of assembly, interacts with the C-terminal region of Rne.

The protein localises to the cytoplasm. Its function is as follows. Globally modulates RNA abundance by binding to RNase E (Rne) and regulating its endonucleolytic activity. Can modulate Rne action in a substrate-dependent manner by altering the composition of the degradosome. The protein is Regulator of ribonuclease activity B of Pseudoalteromonas atlantica (strain T6c / ATCC BAA-1087).